A 228-amino-acid chain; its full sequence is MKFAVIVFPGSNCDRDMYHAVKEVAGAEAELVWYTETDKLEGVDGILLPGGFSYGDYLRSGSMASTSDVMHKIREHAAKGKPVLGVCNGFQILTESGLLPGALMRNKHLSFMCHQEELVVEDNQTFFTSLYEKKEVVRFPIAHGEGSYFCDEATLKELQANNQIVFTYKNNPNGSIENIAGIRNKQGNVLGMMPHPERAVEELLGSDDGLKLFKSMIANWRDSYAINA.

The Glutamine amidotransferase type-1 domain occupies 3–226; it reads FAVIVFPGSN…IANWRDSYAI (224 aa). Cys-87 functions as the Nucleophile in the catalytic mechanism. Catalysis depends on residues His-195 and Glu-197.

As to quaternary structure, part of the FGAM synthase complex composed of 1 PurL, 1 PurQ and 2 PurS subunits.

It is found in the cytoplasm. It catalyses the reaction N(2)-formyl-N(1)-(5-phospho-beta-D-ribosyl)glycinamide + L-glutamine + ATP + H2O = 2-formamido-N(1)-(5-O-phospho-beta-D-ribosyl)acetamidine + L-glutamate + ADP + phosphate + H(+). It carries out the reaction L-glutamine + H2O = L-glutamate + NH4(+). Its pathway is purine metabolism; IMP biosynthesis via de novo pathway; 5-amino-1-(5-phospho-D-ribosyl)imidazole from N(2)-formyl-N(1)-(5-phospho-D-ribosyl)glycinamide: step 1/2. Functionally, part of the phosphoribosylformylglycinamidine synthase complex involved in the purines biosynthetic pathway. Catalyzes the ATP-dependent conversion of formylglycinamide ribonucleotide (FGAR) and glutamine to yield formylglycinamidine ribonucleotide (FGAM) and glutamate. The FGAM synthase complex is composed of three subunits. PurQ produces an ammonia molecule by converting glutamine to glutamate. PurL transfers the ammonia molecule to FGAR to form FGAM in an ATP-dependent manner. PurS interacts with PurQ and PurL and is thought to assist in the transfer of the ammonia molecule from PurQ to PurL. This Oceanobacillus iheyensis (strain DSM 14371 / CIP 107618 / JCM 11309 / KCTC 3954 / HTE831) protein is Phosphoribosylformylglycinamidine synthase subunit PurQ.